The sequence spans 480 residues: RAC-alpha serine/threonine-protein kinase (480 aa).

Residues 5–108 enclose the PH domain; the sequence is AIVKEGWLHK…WTTAIQTVAD (104 aa). Residues lysine 14 and lysine 20 each carry the N6-acetyllysine modification. 14–19 contacts 1D-myo-inositol 1,3,4,5-tetrakisphosphate; that stretch reads KRGEYI. 1D-myo-inositol 1,3,4,5-tetrakisphosphate-binding positions include 23 to 25 and asparagine 53; that span reads RPR. Cysteine 60 and cysteine 77 are disulfide-bonded. Arginine 86 serves as a coordination point for 1D-myo-inositol 1,3,4,5-tetrakisphosphate. A Phosphoserine modification is found at serine 124. Position 129 is a phosphoserine; alternate (serine 129). Serine 129 carries an O-linked (GlcNAc) serine; alternate glycan. In terms of domain architecture, Protein kinase spans 150-408; sequence FEYLKLLGKG…AKEIMQHRFF (259 aa). 156-164 provides a ligand contact to ATP; sequence LGKGTFGKV. Residue tyrosine 176 is modified to Phosphotyrosine; by TNK2. Lysine 179 contacts ATP. Aspartate 274 (proton acceptor) is an active-site residue. Residue lysine 284 forms a Glycyl lysine isopeptide (Lys-Gly) (interchain with G-Cter in ubiquitin) linkage. Cysteine 296 and cysteine 310 are disulfide-bonded. Threonine 305 is a glycosylation site (O-linked (GlcNAc) threonine). Threonine 308 is modified (phosphothreonine; by PDPK1). The O-linked (GlcNAc) threonine glycan is linked to threonine 312. Residues 409–480 enclose the AGC-kinase C-terminal domain; that stretch reads ASIVWQDVYE…QFSYSASATA (72 aa). Threonine 448 is modified (phosphothreonine). Residue threonine 450 is modified to Phosphothreonine; by MTOR. The interval 450–480 is disordered; the sequence is TPPDQDDSMEGVDSERRPHFPQFSYSASATA. Serine 473 carries O-linked (GlcNAc) serine; alternate glycosylation. Serine 473 bears the Phosphoserine; by MTOR; alternate mark. At tyrosine 474 the chain carries Phosphotyrosine. Residue serine 477 is modified to Phosphoserine. Threonine 479 carries the post-translational modification Phosphothreonine.

The protein belongs to the protein kinase superfamily. AGC Ser/Thr protein kinase family. RAC subfamily. In terms of assembly, interacts (via the C-terminus) with CCDC88A (via its C-terminus) and THEM4 (via its C-terminus). Interacts with AKTIP. Interacts (via PH domain) with MTCP1, TCL1A and TCL1B. Interacts with TRAF6. Interacts with GRB10; the interaction leads to GRB10 phosphorylation thus promoting YWHAE binding. Interacts with RARA; the interaction phosphorylates RARA and represses its transactivation activity. Interacts with MAP3K5 and TNK2. Interacts with BAD, CLK2, PPP2R5B, STK3 and STK4. Interacts (via PH domain) with SIRT1. Interacts with SRPK2 in a phosphorylation-dependent manner. Interacts with RAF1. Interacts with PKN2 (via C-terminal domain); the interaction occurs with the C-terminus cleavage products of PKN2 in apoptotic cells. Interacts with TRIM13; the interaction ubiquitinates AKT1 leading to its proteasomal degradation. Interacts with and phosphorylated by PDPK1. Interacts with BTBD10. Interacts with KCTD20. Interacts with PA2G4. Interacts with PA2G4. Interacts with KIF14; the interaction is detected in the plasma membrane upon INS stimulation and promotes AKT1 phosphorylation. Interacts with FAM83B; activates the PI3K/AKT signaling cascade. Interacts with WDFY2 (via WD repeats 1-3). Forms a complex with WDFY2 and FOXO1. Interacts with FAM168A. Interacts with SYAP1 (via phosphorylated form and BSD domain); this interaction is enhanced in a mTORC2-mediated manner in response to epidermal growth factor (EGF) stimulation and activates AKT1. Interacts with PKHM3. Interacts with FKBP5/FKBP51; promoting interaction between Akt/AKT1 and PHLPP1, thereby enhancing dephosphorylation and subsequent activation of Akt/AKT1. Interacts with TMEM175; leading to formation of the lysoK(GF) complex. In terms of processing, O-GlcNAcylation at Thr-305 and Thr-312 inhibits activating phosphorylation at Thr-308 via disrupting the interaction between AKT1 and PDPK1. O-GlcNAcylation at Ser-473 also probably interferes with phosphorylation at this site. Phosphorylation on Thr-308, Ser-473 and Tyr-474 is required for full activity. Phosphorylation of the activation loop at Thr-308 by PDPK1/PDK1 is a prerequisite for full activation. Phosphorylation by mTORC2 in response to growth factors plays a key role in AKT1 activation: mTORC2 phosphorylates different sites depending on the context, such as Thr-450, Ser-473, Ser-477 or Thr-479, thereby facilitating subsequent phosphorylation of the activation loop by PDPK1/PDK1. Phosphorylation at Ser-473 by mTORC2 promotes ubiquitination and degradation by the proteasome. Also phosphorylated at Ser-477 and Thr-479 by CDK2, facilitating subsequent phosphorylation of the activation loop by PDPK1/PDK1. Activated TNK2 phosphorylates it on Tyr-176 resulting in its binding to the anionic plasma membrane phospholipid PA. This phosphorylated form localizes to the cell membrane, where it is targeted by PDPK1 and PDPK2 for further phosphorylations on Thr-308 and Ser-473 leading to its activation. Phosphorylated at Thr-308 and Ser-473 by IKBKE and TBK1. Ser-473 phosphorylation is enhanced by interaction with AGAP2 isoform 2 (PIKE-A). Ser-473 phosphorylation is enhanced by signaling through activated FLT3. Ser-473 is dephosphorylated by PHLPP. Dephosphorylated at Thr-308 and Ser-473 by PP2A phosphatase. The phosphorylated form of PPP2R5B is required for bridging AKT1 with PP2A phosphatase. Ser-473 is dephosphorylated by CPPED1, leading to termination of signaling. AIM2 acts as an inhibitor of AKT1 by inhibiting phosphorylation Ser-473: AIM2 acts both by inhibiting the activity of PRKDC/DNA-PK kinase and promoting dephosphorylation by PP2A phosphatase. Post-translationally, ubiquitinated; undergoes both 'Lys-48'- and 'Lys-63'-linked polyubiquitination. TRAF6-induced 'Lys-63'-linked AKT1 ubiquitination is critical for phosphorylation and activation. When ubiquitinated, it translocates to the plasma membrane, where it becomes phosphorylated. When fully phosphorylated and translocated into the nucleus, undergoes 'Lys-48'-polyubiquitination catalyzed by TTC3, leading to its degradation by the proteasome. Ubiquitinated via 'Lys-48'-linked polyubiquitination by ZNRF1, leading to its degradation by the proteasome. Also ubiquitinated by TRIM13 leading to its proteasomal degradation. Phosphorylated, undergoes 'Lys-48'-linked polyubiquitination preferentially at Lys-284 catalyzed by MUL1, leading to its proteasomal degradation. In terms of processing, acetylated on Lys-14 and Lys-20 by the histone acetyltransferases EP300 and KAT2B. Acetylation results in reduced phosphorylation and inhibition of activity. Deacetylated at Lys-14 and Lys-20 by SIRT1. SIRT1-mediated deacetylation relieves the inhibition. Cleavage by caspase-3/CASP3. Cleaved at the caspase-3 consensus site Asp-462 during apoptosis, resulting in down-regulation of the AKT signaling pathway and decreased cell survival.

The protein localises to the cytoplasm. It is found in the nucleus. The protein resides in the cell membrane. It localises to the mitochondrion intermembrane space. The enzyme catalyses L-seryl-[protein] + ATP = O-phospho-L-seryl-[protein] + ADP + H(+). It catalyses the reaction L-threonyl-[protein] + ATP = O-phospho-L-threonyl-[protein] + ADP + H(+). In terms of biological role, AKT1 is one of 3 closely related serine/threonine-protein kinases (AKT1, AKT2 and AKT3) called the AKT kinase, and which regulate many processes including metabolism, proliferation, cell survival, growth and angiogenesis. This is mediated through serine and/or threonine phosphorylation of a range of downstream substrates. Over 100 substrate candidates have been reported so far, but for most of them, no isoform specificity has been reported. AKT is responsible of the regulation of glucose uptake by mediating insulin-induced translocation of the SLC2A4/GLUT4 glucose transporter to the cell surface. Phosphorylation of PTPN1 at 'Ser-50' negatively modulates its phosphatase activity preventing dephosphorylation of the insulin receptor and the attenuation of insulin signaling. Phosphorylation of TBC1D4 triggers the binding of this effector to inhibitory 14-3-3 proteins, which is required for insulin-stimulated glucose transport. AKT also regulates the storage of glucose in the form of glycogen by phosphorylating GSK3A at 'Ser-21' and GSK3B at 'Ser-9', resulting in inhibition of its kinase activity. Phosphorylation of GSK3 isoforms by AKT is also thought to be one mechanism by which cell proliferation is driven. AKT also regulates cell survival via the phosphorylation of MAP3K5 (apoptosis signal-related kinase). Phosphorylation of 'Ser-83' decreases MAP3K5 kinase activity stimulated by oxidative stress and thereby prevents apoptosis. AKT mediates insulin-stimulated protein synthesis by phosphorylating TSC2 at 'Ser-939' and 'Thr-1462', thereby activating the mTORC1 signaling pathway, and leading to both phosphorylation of 4E-BP1 and in activation of RPS6KB1. Also regulates the mTORC1 signaling pathway by catalyzing phosphorylation of CASTOR1 and DEPDC5. AKT plays a role as key modulator of the AKT-mTOR signaling pathway controlling the tempo of the process of newborn neurons integration during adult neurogenesis, including correct neuron positioning, dendritic development and synapse formation. Part of a positive feedback loop of mTORC2 signaling by mediating phosphorylation of MAPKAP1/SIN1, promoting mTORC2 activation. AKT is involved in the phosphorylation of members of the FOXO factors (Forkhead family of transcription factors), leading to binding of 14-3-3 proteins and cytoplasmic localization. In particular, FOXO1 is phosphorylated at 'Thr-24', 'Ser-256' and 'Ser-319'. FOXO3 and FOXO4 are phosphorylated on equivalent sites. AKT has an important role in the regulation of NF-kappa-B-dependent gene transcription and positively regulates the activity of CREB1 (cyclic AMP (cAMP)-response element binding protein). The phosphorylation of CREB1 induces the binding of accessory proteins that are necessary for the transcription of pro-survival genes such as BCL2 and MCL1. AKT phosphorylates 'Ser-454' on ATP citrate lyase (ACLY), thereby potentially regulating ACLY activity and fatty acid synthesis. Activates the 3B isoform of cyclic nucleotide phosphodiesterase (PDE3B) via phosphorylation of 'Ser-273', resulting in reduced cyclic AMP levels and inhibition of lipolysis. Phosphorylates PIKFYVE on 'Ser-318', which results in increased PI(3)P-5 activity. The Rho GTPase-activating protein DLC1 is another substrate and its phosphorylation is implicated in the regulation cell proliferation and cell growth. Signals downstream of phosphatidylinositol 3-kinase (PI(3)K) to mediate the effects of various growth factors such as platelet-derived growth factor (PDGF), epidermal growth factor (EGF), insulin and insulin-like growth factor 1 (IGF1). AKT mediates the antiapoptotic effects of IGF1. Essential for the SPATA13-mediated regulation of cell migration and adhesion assembly and disassembly. May be involved in the regulation of the placental development. Phosphorylates STK4/MST1 at 'Thr-120' and 'Thr-387' leading to inhibition of its: kinase activity, nuclear translocation, autophosphorylation and ability to phosphorylate FOXO3. Phosphorylates STK3/MST2 at 'Thr-117' and 'Thr-384' leading to inhibition of its: cleavage, kinase activity, autophosphorylation at Thr-180, binding to RASSF1 and nuclear translocation. Phosphorylates SRPK2 and enhances its kinase activity towards SRSF2 and ACIN1 and promotes its nuclear translocation. Phosphorylates RAF1 at 'Ser-259' and negatively regulates its activity. Phosphorylation of BAD stimulates its pro-apoptotic activity. Phosphorylates KAT6A at 'Thr-369' and this phosphorylation inhibits the interaction of KAT6A with PML and negatively regulates its acetylation activity towards p53/TP53. Phosphorylates palladin (PALLD), modulating cytoskeletal organization and cell motility. Phosphorylates prohibitin (PHB), playing an important role in cell metabolism and proliferation. Phosphorylates CDKN1A, for which phosphorylation at 'Thr-145' induces its release from CDK2 and cytoplasmic relocalization. These recent findings indicate that the AKT1 isoform has a more specific role in cell motility and proliferation. Phosphorylates CLK2 thereby controlling cell survival to ionizing radiation. Phosphorylates PCK1 at 'Ser-90', reducing the binding affinity of PCK1 to oxaloacetate and changing PCK1 into an atypical protein kinase activity using GTP as donor. Also acts as an activator of TMEM175 potassium channel activity in response to growth factors: forms the lysoK(GF) complex together with TMEM175 and acts by promoting TMEM175 channel activation, independently of its protein kinase activity. Acts as a negative regulator of the cGAS-STING pathway by mediating phosphorylation of CGAS during mitosis, leading to its inhibition. Acts as a regulator of mitochondrial calcium uptake by mediating phosphorylation of MICU1 in the mitochondrial intermembrane space, impairing MICU1 maturation. Acts as an inhibitor of tRNA methylation by mediating phosphorylation of the N-terminus of METTL1, thereby inhibiting METTL1 methyltransferase activity. In response to LPAR1 receptor pathway activation, phosphorylates Rabin8/RAB3IP which alters its activity and phosphorylates WDR44 which induces WDR44 binding to Rab11, thereby switching Rab11 vesicular function from preciliary trafficking to endocytic recycling. This chain is RAC-alpha serine/threonine-protein kinase (AKT1), found in Bos taurus (Bovine).